Here is a 492-residue protein sequence, read N- to C-terminus: Serine incorporator 4 (492 aa).

The next 10 membrane-spanning stretches (helical) occupy residues 58-78 (FYIL…SKTV), 113-133 (AVYR…VLLV), 148-168 (SFWS…FCIP), 179-199 (IGIC…TAFA), 217-237 (FLGV…GAVL), 254-274 (LLSL…APCI), 281-301 (SGLL…FSAL), 330-350 (IPDA…VLFA), 421-441 (GFHF…TNWF), and 464-484 (VASC…PLLA).

The protein belongs to the TDE1 family.

Its subcellular location is the membrane. In terms of biological role, incorporates a polar amino acid serine into membranes and facilitates the synthesis of two serine-derived lipids, phosphatidylserine and sphingolipids. In Rattus norvegicus (Rat), this protein is Serine incorporator 4 (Serinc4).